Here is a 464-residue protein sequence, read N- to C-terminus: UDP-N-acetylmuramate--L-alanine ligase (464 aa).

Position 123–129 (123–129) interacts with ATP; the sequence is GTHGKTT.

It belongs to the MurCDEF family.

It is found in the cytoplasm. It carries out the reaction UDP-N-acetyl-alpha-D-muramate + L-alanine + ATP = UDP-N-acetyl-alpha-D-muramoyl-L-alanine + ADP + phosphate + H(+). It functions in the pathway cell wall biogenesis; peptidoglycan biosynthesis. Its function is as follows. Cell wall formation. The sequence is that of UDP-N-acetylmuramate--L-alanine ligase from Carboxydothermus hydrogenoformans (strain ATCC BAA-161 / DSM 6008 / Z-2901).